We begin with the raw amino-acid sequence, 1755 residues long: Deleted in lung and esophageal cancer protein 1 (1755 aa).

Basic residues predominate over residues 1 to 12; the sequence is METRSSKTRRSL. Disordered stretches follow at residues 1-39, 1339-1360, and 1529-1553; these read METR…PSQP, PGPS…GSSS, and SQDG…EETA. Residues 30 to 39 show a composition bias toward low complexity; sequence PAGSSSPSQP.

As to quaternary structure, interacts with alpha- and beta-tubulin. Interacts with BBS2, BBS4, BBS5, MKKS, TCP1, CCT2, CCT3, CCT4, CCT5 and CCT7. As to expression, expressed in all tissues examined. Expression is highest in prostate and testis.

The protein localises to the cytoplasm. Essential for spermatogenesis and male fertility. May play an important role in sperm head and tail formation. May act as a tumor suppressor by inhibiting cell proliferation. The protein is Deleted in lung and esophageal cancer protein 1 of Homo sapiens (Human).